The chain runs to 889 residues: Phosphofurin acidic cluster sorting protein 2 (889 aa).

Disordered regions lie at residues 180-246 (DHED…TSMT), 293-463 (LDME…PDAR), and 687-740 (SSAT…SQGV). Over residues 343 to 358 (SHKEPPSPADVPEKTR) the composition is skewed to basic and acidic residues. Residues Ser-390, Ser-416, Ser-453, Ser-691, and Ser-694 each carry the phosphoserine modification. Composition is skewed to low complexity over residues 687-720 (SSATSGDSDDAAPSGSGTLSSTPPSASPAAKEAS) and 727-737 (PSVSGGLSSPS).

Belongs to the PACS family. Interacts with BID and PKD2. Interacts with SIRT1. Interacts with HDAC1. Interacts with TRPV1. Interacts with WDR37. In terms of assembly, (Microbial infection) Interacts with HIV-1 Nef. As to expression, broadly expressed, with greatest levels in skeletal muscle followed by heart, brain, pancreas and testis.

Its subcellular location is the endoplasmic reticulum. It localises to the mitochondrion. Functionally, multifunctional sorting protein that controls the endoplasmic reticulum (ER)-mitochondria communication, including the apposition of mitochondria with the ER and ER homeostasis. In addition, in response to apoptotic inducer, translocates BIB to mitochondria, which initiates a sequence of events including the formation of mitochondrial truncated BID, the release of cytochrome c, the activation of caspase-3 thereby causing cell death. May also be involved in ion channel trafficking, directing acidic cluster-containing ion channels to distinct subcellular compartments. This chain is Phosphofurin acidic cluster sorting protein 2, found in Homo sapiens (Human).